We begin with the raw amino-acid sequence, 455 residues long: P2X purinoceptor 5 (455 aa).

Over 1–30 the chain is Cytoplasmic; that stretch reads MGQAAWKGFVLSLFDYKTAKFVVAKSKKVG. A helical transmembrane segment spans residues 31-50; the sequence is LLYRVLQLTILLYLLIWVFL. The Extracellular portion of the chain corresponds to 51–339; it reads IKKSYQDIDT…KFSIIPTVIN (289 aa). 69 to 71 is an ATP binding site; it reads KVK. Asn-77 is a glycosylation site (N-linked (GlcNAc...) asparagine). Disulfide bonds link Cys-118–Cys-169, Cys-129–Cys-152, and Cys-135–Cys-163. Asn-157 carries an N-linked (GlcNAc...) asparagine glycan. Thr-189 contributes to the ATP binding site. Asn-202 carries N-linked (GlcNAc...) asparagine glycosylation. 2 disulfides stabilise this stretch: Cys-220/Cys-229 and Cys-263/Cys-272. Residues 294–296 and Lys-314 each bind ATP; that span reads NFR. A helical membrane pass occupies residues 340-362; the sequence is IGSGLALMGAGAFFCDLVLIYLI. At 363 to 455 the chain is on the cytoplasmic side; that stretch reads RKSEFYRDKK…PSQILQTVKT (93 aa).

The protein belongs to the P2X receptor family. Functional P2XRs are organized as homomeric and heteromeric trimers. Homotrimer. Forms heterotrimer with P2RX1. Expressed in a number of tissues, with highest levels detected in heart and kidney.

The protein resides in the cell membrane. The catalysed reaction is Na(+)(in) = Na(+)(out). The enzyme catalyses Ca(2+)(in) = Ca(2+)(out). It catalyses the reaction chloride(in) = chloride(out). Activated by ATP. Slowly desensitizing. Not activated by ATP agonist alpha/beta-methylene-ATP. Highly sensitive to the antagonists suramin and PPADS. ATP-gated nonselective transmembrane cation channel permeable to potassium, sodium and calcium. Unlike other P2RX receptors, the P2X5 receptor is also permeable to chloride. Acts as an important regulator of inflammatory-related bone loss and osteoclast multinucleation. This Mus musculus (Mouse) protein is P2X purinoceptor 5.